The chain runs to 421 residues: uncharacterized protein (421 aa).

An N6-(pyridoxal phosphate)lysine modification is found at Lys249.

It belongs to the class-I pyridoxal-phosphate-dependent aminotransferase family. The cofactor is pyridoxal 5'-phosphate.

Its subcellular location is the cytoplasm. This is an uncharacterized protein from Schizosaccharomyces pombe (strain 972 / ATCC 24843) (Fission yeast).